The following is a 146-amino-acid chain: Large ribosomal subunit protein mL41 (146 aa).

The N-terminal 16 residues, 1–16 (MKGSPISQFSKTSINA), are a transit peptide targeting the mitochondrion.

The protein belongs to the mitochondrion-specific ribosomal protein mL41 family. As to quaternary structure, component of the mitochondrial large ribosomal subunit (mt-LSU). Mature yeast 74S mitochondrial ribosomes consist of a small (37S) and a large (54S) subunit. The 37S small subunit contains a 15S ribosomal RNA (15S mt-rRNA) and 34 different proteins. The 54S large subunit contains a 21S rRNA (21S mt-rRNA) and 46 different proteins.

It localises to the mitochondrion. Functionally, component of the mitochondrial ribosome (mitoribosome), a dedicated translation machinery responsible for the synthesis of mitochondrial genome-encoded proteins, including at least some of the essential transmembrane subunits of the mitochondrial respiratory chain. The mitoribosomes are attached to the mitochondrial inner membrane and translation products are cotranslationally integrated into the membrane. The polypeptide is Large ribosomal subunit protein mL41 (MRPL27) (Saccharomyces cerevisiae (strain ATCC 204508 / S288c) (Baker's yeast)).